The primary structure comprises 61 residues: Small ribosomal subunit protein uS14 (61 aa).

Residues Cys-24, Cys-27, Cys-40, and Cys-43 each contribute to the Zn(2+) site.

This sequence belongs to the universal ribosomal protein uS14 family. Zinc-binding uS14 subfamily. Part of the 30S ribosomal subunit. Contacts proteins S3 and S10. The cofactor is Zn(2+).

Functionally, binds 16S rRNA, required for the assembly of 30S particles and may also be responsible for determining the conformation of the 16S rRNA at the A site. This is Small ribosomal subunit protein uS14 from Acetivibrio thermocellus (strain ATCC 27405 / DSM 1237 / JCM 9322 / NBRC 103400 / NCIMB 10682 / NRRL B-4536 / VPI 7372) (Clostridium thermocellum).